A 310-amino-acid polypeptide reads, in one-letter code: Putative S-adenosyl-L-methionine-dependent methyltransferase Mb0151 (310 aa).

S-adenosyl-L-methionine is bound by residues D132 and 161–162; that span reads DL.

It belongs to the UPF0677 family.

Its function is as follows. Exhibits S-adenosyl-L-methionine-dependent methyltransferase activity. This chain is Putative S-adenosyl-L-methionine-dependent methyltransferase Mb0151, found in Mycobacterium bovis (strain ATCC BAA-935 / AF2122/97).